A 324-amino-acid polypeptide reads, in one-letter code: dITP/XTP pyrophosphatase (324 aa).

The segment at 1 to 127 (MTKTIFESKT…KNDNNFGDTI (127 aa)) is unknown. The tract at residues 128–324 (LIATHNEGKT…EVFPKWQLEN (197 aa)) is NTP pyrophosphatase. 131-136 (THNEGK) provides a ligand contact to substrate. Residues Glu164 and Asp193 each contribute to the Mg(2+) site. Asp193 serves as the catalytic Proton acceptor. Residues Ser194, 277–280 (FGYD), Lys300, and 305–306 (HR) each bind substrate.

This sequence belongs to the HAM1 NTPase family. In terms of assembly, homodimer. It depends on Mg(2+) as a cofactor.

The catalysed reaction is XTP + H2O = XMP + diphosphate + H(+). It carries out the reaction dITP + H2O = dIMP + diphosphate + H(+). It catalyses the reaction ITP + H2O = IMP + diphosphate + H(+). Functionally, pyrophosphatase that catalyzes the hydrolysis of nucleoside triphosphates to their monophosphate derivatives, with a high preference for the non-canonical purine nucleotides XTP (xanthosine triphosphate), dITP (deoxyinosine triphosphate) and ITP. Seems to function as a house-cleaning enzyme that removes non-canonical purine nucleotides from the nucleotide pool, thus preventing their incorporation into DNA/RNA and avoiding chromosomal lesions. In Streptococcus agalactiae serotype III (strain NEM316), this protein is dITP/XTP pyrophosphatase.